The primary structure comprises 325 residues: DNA-directed RNA polymerase subunit alpha (325 aa).

The segment at 1 to 231 (MQTSLLKPKI…DQLSVFAALE (231 aa)) is alpha N-terminal domain (alpha-NTD). Positions 246–325 (IDPILLRPVD…ENWPPAGLDK (80 aa)) are alpha C-terminal domain (alpha-CTD).

It belongs to the RNA polymerase alpha chain family. As to quaternary structure, homodimer. The RNAP catalytic core consists of 2 alpha, 1 beta, 1 beta' and 1 omega subunit. When a sigma factor is associated with the core the holoenzyme is formed, which can initiate transcription.

It catalyses the reaction RNA(n) + a ribonucleoside 5'-triphosphate = RNA(n+1) + diphosphate. Its function is as follows. DNA-dependent RNA polymerase catalyzes the transcription of DNA into RNA using the four ribonucleoside triphosphates as substrates. The sequence is that of DNA-directed RNA polymerase subunit alpha from Burkholderia orbicola (strain MC0-3).